Here is a 616-residue protein sequence, read N- to C-terminus: MALLQISEPGLSAAPHQRRLAAGIDLGTTNSLVATVRSGQAETLPDHEGRHLLPSVVHYQQQGHTVGYAARDNAAQDTANTISSVKRMMGRSLADIQARYPHLPYRFKASVNGLPMIDTSAGLLNPVRVSADILKALAARASESLSGELDGVVITVPAYFDDAQRQGTKDAARLAGLHVLRLLNEPTAAAIAYGLDSGKEGVIAVYDLGGGTFDISILRLSRGVFEVLATGGDSALGGDDFDHLLADYIREQAGIADRSDNRVQRELLDAAIAAKIALSDADTVRVNVAGWQGEITREQFNDLISALVKRTLLACRRALKDAGVEPQDVLEVVMVGGSTRVPLVRERVGEFFGRTPLTAIDPDKVVAIGAAIQADILVGNKPDSEMLLLDVIPLSLGLETMGGLVEKVIPRNTTIPVARAQDFTTFKDGQTAMSIHVMQGERELVQDCRSLARFALRGIPPLPAGGAHIRVTFQVDADGLLSVTAMEKSTGVEASIQVKPSYGLTDGEIASMIKDSMSFAEQDVKARMLAEQKVEAARVLESLTGALTADAALLSAAERQCIDDAAAHLSAVAQGDDVDAIEQAIKNVDKQTQEFAARRMDQSVRRALKGHSVDEV.

Belongs to the heat shock protein 70 family.

Chaperone involved in the maturation of iron-sulfur cluster-containing proteins. Has a low intrinsic ATPase activity which is markedly stimulated by HscB. Involved in the maturation of IscU. In Salmonella paratyphi C (strain RKS4594), this protein is Chaperone protein HscA.